The sequence spans 374 residues: DNA replication and repair protein RecF (374 aa).

Position 30–37 (30–37 (GNNAQGKS)) interacts with ATP.

This sequence belongs to the RecF family.

It is found in the cytoplasm. Its function is as follows. The RecF protein is involved in DNA metabolism; it is required for DNA replication and normal SOS inducibility. RecF binds preferentially to single-stranded, linear DNA. It also seems to bind ATP. This is DNA replication and repair protein RecF from Nostoc punctiforme (strain ATCC 29133 / PCC 73102).